A 506-amino-acid polypeptide reads, in one-letter code: Ribose import ATP-binding protein RbsA 1 (506 aa).

2 ABC transporter domains span residues 5 to 241 (LALT…VGRR) and 254 to 498 (RDAA…TSDA). 37–44 (GENGAGKS) contributes to the ATP binding site.

It belongs to the ABC transporter superfamily. Ribose importer (TC 3.A.1.2.1) family. As to quaternary structure, the complex is composed of an ATP-binding protein (RbsA), two transmembrane proteins (RbsC) and a solute-binding protein (RbsB).

The protein resides in the cell inner membrane. It carries out the reaction D-ribose(out) + ATP + H2O = D-ribose(in) + ADP + phosphate + H(+). Its function is as follows. Part of the ABC transporter complex RbsABC involved in ribose import. Responsible for energy coupling to the transport system. The polypeptide is Ribose import ATP-binding protein RbsA 1 (Burkholderia thailandensis (strain ATCC 700388 / DSM 13276 / CCUG 48851 / CIP 106301 / E264)).